A 560-amino-acid chain; its full sequence is Membrane protein insertase YidC (560 aa).

Transmembrane regions (helical) follow at residues 5–25 (IINL…WQYF), 334–354 (AIDF…MNFF), 357–377 (YVGN…LLMF), 431–451 (LPIL…YVTI), 476–496 (LFGL…WPIL), and 522–542 (FMPL…LIYW).

The protein belongs to the OXA1/ALB3/YidC family. Type 1 subfamily. In terms of assembly, interacts with the Sec translocase complex via SecD. Specifically interacts with transmembrane segments of nascent integral membrane proteins during membrane integration.

It is found in the cell inner membrane. Required for the insertion and/or proper folding and/or complex formation of integral membrane proteins into the membrane. Involved in integration of membrane proteins that insert both dependently and independently of the Sec translocase complex, as well as at least some lipoproteins. Aids folding of multispanning membrane proteins. The chain is Membrane protein insertase YidC from Rickettsia rickettsii (strain Iowa).